The sequence spans 431 residues: Glycolipid 2-alpha-mannosyltransferase 1 (431 aa).

Residues 1–9 lie on the Cytoplasmic side of the membrane; it reads MASTRSNAR. A helical; Signal-anchor for type II membrane protein transmembrane segment spans residues 10–28; the sequence is LIRFGIFALVLIGCGYILT. The Lumenal portion of the chain corresponds to 29-431; sequence RGSSFQPPNY…RQKGWEKYTA (403 aa). Over residues 35 to 44 the composition is skewed to polar residues; it reads PPNYQQTQSP. The interval 35–73 is disordered; sequence PPNYQQTQSPAAHEKQTGNVAAGGGAGSGSAGAQVPLGK. The segment covering 55-64 has biased composition (gly residues); that stretch reads AAGGGAGSGS. E318 acts as the Nucleophile in catalysis.

This sequence belongs to the glycosyltransferase 15 family.

Its subcellular location is the golgi apparatus membrane. It functions in the pathway protein modification; protein glycosylation. Involved in O-glycosylation of cell wall and secreted proteins. Transfers an alpha-D-mannosyl residue from GDP-mannose into lipid-linked oligosaccharide, forming an alpha-(1-&gt;2)-D-mannosyl-D-mannose linkage. Mainly responsible for the addition of the second mannose residue in an O-linked mannose pentamer. Can also substitute for MNT2 by adding the third mannose residue. Important for adherence to host surfaces and for virulence. This is Glycolipid 2-alpha-mannosyltransferase 1 (MNT1) from Candida albicans (strain SC5314 / ATCC MYA-2876) (Yeast).